Here is a 427-residue protein sequence, read N- to C-terminus: Peptidase B (427 aa).

Residues Lys195 and Asp200 each contribute to the Mn(2+) site. Lys207 is a catalytic residue. 3 residues coordinate Mn(2+): Asp218, Asp277, and Glu279. Residue Arg281 is part of the active site.

The protein belongs to the peptidase M17 family. In terms of assembly, homohexamer. Requires Mn(2+) as cofactor.

The protein resides in the cytoplasm. It catalyses the reaction Release of an N-terminal amino acid, Xaa, from a peptide or arylamide. Xaa is preferably Glu or Asp but may be other amino acids, including Leu, Met, His, Cys and Gln.. In terms of biological role, probably plays an important role in intracellular peptide degradation. In Shigella flexneri, this protein is Peptidase B.